A 1165-amino-acid polypeptide reads, in one-letter code: Leptin receptor (1165 aa).

An N-terminal signal peptide occupies residues 1–21; the sequence is MTCPKFSVALLHWEFIYVITA. The Extracellular portion of the chain corresponds to 22 to 838; the sequence is FDLAYPITPW…TQDGEKHRND (817 aa). 5 disulfide bridges follow: Cys-37–Cys-90, Cys-89–Cys-99, Cys-131–Cys-142, Cys-186–Cys-196, and Cys-188–Cys-193. 5 N-linked (GlcNAc...) asparagine glycosylation sites follow: Asn-41, Asn-55, Asn-72, Asn-80, and Asn-98. The N-linked (GlcNAc...) asparagine glycan is linked to Asn-187. 4 N-linked (GlcNAc...) asparagine glycosylation sites follow: Asn-206, Asn-276, Asn-347, and Asn-397. In terms of domain architecture, Fibronectin type-III 1 spans 239 to 332; that stretch reads PPLGLHMEIT…STPFTFTTQD (94 aa). Intrachain disulfides connect Cys-352–Cys-412 and Cys-413–Cys-418. A glycan (N-linked (GlcNAc...) asparagine) is linked at Asn-433. 3 disulfides stabilise this stretch: Cys-436/Cys-447, Cys-473/Cys-528, and Cys-488/Cys-498. Residues 467–484 are leptin-binding; that stretch reads HRSSLYCSDVPSVHPISE. 3 consecutive Fibronectin type-III domains span residues 539–634, 642–736, and 740–834; these read PPSS…TVVT, GPEF…WPMS, and IVQS…DGEK. A WSXWS motif motif is present at residues 622 to 626; it reads WSNWS. N-linked (GlcNAc...) asparagine glycosylation is found at Asn-624, Asn-659, Asn-670, Asn-697, Asn-728, and Asn-750. The chain crosses the membrane as a helical span at residues 839-861; it reads AGLYVIVPIIISSSILLLGTLLM. Residues 862 to 1165 are Cytoplasmic-facing; that stretch reads SHQRMKKLFW…MENKMYDLTV (304 aa). The Box 1 motif signature appears at 870-878; the sequence is FWEDVPNPK. The residue at position 881 (Ser-881) is a Phosphoserine. The segment at 892–897 is required for JAK2 activation; that stretch reads ETFEHL. A required for STAT3 phosphorylation region spans residues 897–905; that stretch reads LFIKHTESV. Tyr-986 is modified (phosphotyrosine; by JAK2). Position 1079 is a phosphotyrosine (Tyr-1079). Tyr-1141 carries the post-translational modification Phosphotyrosine; by JAK2.

Belongs to the type I cytokine receptor family. Type 2 subfamily. Present as a mixture of monomers and dimers. The phosphorylated receptor binds a number of SH2 domain-containing proteins such as JAK2, STAT3, PTPN11, and SOCS3. Interaction with SOCS3 inhibits JAK/STAT signaling and MAPK cascade. On ligand binding, phosphorylated on two conserved C-terminal tyrosine residues by JAK2. Tyr-986 is required for complete binding and activation of PTPN11, ERK/FOS activation,for interaction with SOCS3 and SOCS3 mediated inhibition of leptin signaling. Phosphorylation on Tyr-1141 is required for STAT3 binding/activation. Phosphorylation of Tyr-1079 has a more accessory role. As to expression, kidney, liver, spleen, lung, brain, testis, uterus, ovary, corpus luteum, theca and granulosa cells.

The protein localises to the cell membrane. Its subcellular location is the basolateral cell membrane. Functionally, receptor for hormone LEP/leptin. On ligand binding, mediates LEP central and peripheral effects through the activation of different signaling pathways such as JAK2/STAT3 and MAPK cascade/FOS. In the hypothalamus, LEP acts as an appetite-regulating factor that induces a decrease in food intake and an increase in energy consumption by inducing anorexinogenic factors and suppressing orexigenic neuropeptides, also regulates bone mass and secretion of hypothalamo-pituitary-adrenal hormones. In the periphery, increases basal metabolism, influences reproductive function, regulates pancreatic beta-cell function and insulin secretion, is pro-angiogenic and affects innate and adaptive immunity. Control of energy homeostasis and melanocortin production (stimulation of POMC and full repression of AgRP transcription) is mediated by STAT3 signaling, whereas distinct signals regulate NPY and the control of fertility, growth and glucose homeostasis. Involved in the regulation of counter-regulatory response to hypoglycemia by inhibiting neurons of the parabrachial nucleus. Has a specific effect on T lymphocyte responses, differentially regulating the proliferation of naive and memory T-cells. Leptin increases Th1 and suppresses Th2 cytokine production. The polypeptide is Leptin receptor (LEPR) (Sus scrofa (Pig)).